A 2313-amino-acid chain; its full sequence is Histone-lysine N-methyltransferase Set2 (2313 aa).

Disordered stretches follow at residues 1 to 115 (MEES…ASTS), 179 to 442 (AVGG…EETF), 550 to 858 (EPPL…LKAK), 883 to 1106 (RLDE…KKAL), 1118 to 1150 (ETES…PFGD), and 1163 to 1251 (KRDK…SQGR). The a.T hook 1 DNA-binding region spans 17–29 (GRGRGRPPKVALS). Residues 73 to 82 (IKFDVRDLLN) are compositionally biased toward basic and acidic residues. The segment covering 101–115 (STGHSQSGTTAASTS) has biased composition (low complexity). Positions 197 to 209 (PRKRGRPRKSQLA) form a DNA-binding region, a.T hook 2. A compositionally biased stretch (low complexity) spans 221 to 241 (SCSDSDTNSTSTTTSNMSSDS). The span at 252–265 (PKSKLRVSLKRLKL) shows a compositional bias: basic residues. The segment covering 266–288 (GGRLESSDSGNSPSSSSPEVEPP) has biased composition (low complexity). Residues 330–345 (ESPKGEEEQEEGRPVE) show a composition bias toward basic and acidic residues. Composition is skewed to acidic residues over residues 347–356 (EPQDLIDIDM), 365–375 (PDPEEDLDEIM), and 388–398 (ADDEAEEEEDA). Thr-404 is modified (phosphothreonine). Residues 412-433 (ADSCSSAPRRSRRSAPLSGSSR) are compositionally biased toward low complexity. Positions 552–563 (PLKDESDPKQTE) are enriched in basic and acidic residues. The segment covering 659-671 (EDYESNQEQVAED) has biased composition (acidic residues). The segment covering 676–685 (CNNQKGQKQT) has biased composition (polar residues). 4 stretches are compositionally biased toward basic and acidic residues: residues 689–708 (EMKE…EKAM), 719–732 (VDKK…EKKV), 740–749 (VPEKKMDSKK), and 758–782 (KQKE…KSSA). Ser-786 and Ser-788 each carry phosphoserine. Composition is skewed to polar residues over residues 800–833 (AQWS…SNQP), 918–928 (KSLSGKTSLRR), and 938–955 (LERN…NTSA). Basic residues predominate over residues 959-969 (KPSKVKKKINP). Low complexity predominate over residues 997 to 1010 (SSPVSTSSDSSSKR). Basic and acidic residues predominate over residues 1016-1039 (TTSDLDGGSKLDQRRYTICEDRQP). Composition is skewed to low complexity over residues 1085–1097 (SRQN…SSAS) and 1118–1127 (ETESSESTSS). Residues 1163–1183 (KRDKVDEDQRKEGQDEVKREA) are compositionally biased toward basic and acidic residues. Residues 1199 to 1213 (TPATTPTPSPTQSNP) are compositionally biased toward low complexity. One can recognise an AWS domain in the interval 1307 to 1360 (NAEMQCDCFLTGDEEAQGHLSCGAGCINRMLMIECGPLCSNGARCTNKRFQQHQ). The Zn(2+) site is built by Cys-1312, Cys-1314, Cys-1328, Cys-1332, Cys-1341, Cys-1345, and Cys-1351. One can recognise an SET domain in the interval 1362–1479 (WPCRVFRTEK…PGEEITFDYQ (118 aa)). Residues 1415-1417 (HYY) and 1440-1441 (NH) contribute to the S-adenosyl-L-methionine site. Cys-1443 is a binding site for Zn(2+). The region spanning 1486 to 1502 (DAQRCYCEAANCRGWIG) is the Post-SET domain. Gln-1488 contacts S-adenosyl-L-methionine. Cys-1490 lines the Zn(2+) pocket. Tyr-1491 lines the S-adenosyl-L-methionine pocket. Zn(2+) is bound by residues Cys-1492 and Cys-1497. 2 disordered regions span residues 1501 to 1598 (IGGE…KPKV) and 1763 to 1860 (MKEH…RRTL). Residues 1505–1534 (PDSDEGEQLDEESDSDAEMDEEELEAEPEE) are compositionally biased toward acidic residues. The segment covering 1539–1551 (KSAKAKAKSKLKA) has biased composition (basic residues). 3 stretches are compositionally biased toward basic and acidic residues: residues 1564–1574 (QTKPKDREYKA), 1763–1774 (MKEHEREADRQQ), and 1784–1806 (EDQR…RDTT). The span at 1817–1832 (SGNNTICTITTQQKGS) shows a compositional bias: polar residues. Basic and acidic residues predominate over residues 1840-1860 (TRNDNRRRSDIGPPSEQRRTL). The WW domain maps to 1963–1996 (DPLPPAWNWQVTSDGDIYYYNLRERISQWEPPSP). Phosphoserine is present on residues Ser-2130 and Ser-2131. Residues 2177–2218 (LGTVGKRKLPMPPSVTVKKHRQEQRSKKVKSSQSPLTATSAR) are disordered. Residues 2193–2206 (VKKHRQEQRSKKVK) show a composition bias toward basic residues. Positions 2207–2216 (SSQSPLTATS) are enriched in polar residues.

This sequence belongs to the class V-like SAM-binding methyltransferase superfamily. Histone-lysine methyltransferase family. SET2 subfamily. As to quaternary structure, interacts with (phosphorylated) Polr2A.

It localises to the nucleus. The protein localises to the chromosome. It catalyses the reaction L-lysyl(36)-[histone H3] + 3 S-adenosyl-L-methionine = N(6),N(6),N(6)-trimethyl-L-lysyl(36)-[histone H3] + 3 S-adenosyl-L-homocysteine + 3 H(+). Its function is as follows. Histone methyltransferase that specifically trimethylates 'Lys-36' of histone H3 (H3K36me3). Represents the main enzyme generating H3K36me3, a specific tag for epigenetic transcriptional activation. Involved in dosage compensation in males (X chromosome dosage compensation) by mediating formation of H3K36me3, a mark recognized by msl-3 component of the MSL complex. In addition to its role in dosage compensation in males, promotes germline stem cell differentiation in females: catalyzes formation of H3K36me3, promoting recruitment of msl-3 and subsequent recruitment of the ATAC complex, leading to transcription of genes, such as RpS19b. This chain is Histone-lysine N-methyltransferase Set2, found in Drosophila melanogaster (Fruit fly).